A 481-amino-acid chain; its full sequence is Phototropic-responsive NPH3 family protein NPY4 (481 aa).

The BTB domain occupies 29–102 (TEIIIIIGNV…CYGITVTLNA (74 aa)). Positions 207–450 (DWWVEDLCEL…VQVLFFEQIR (244 aa)) constitute an NPH3 domain. At Y391 the chain carries Phosphotyrosine. The tract at residues 456 to 481 (TGYSTPELTTTTLNTEDDEWDHEKEF) is disordered. A compositionally biased stretch (low complexity) spans 460–469 (TPELTTTTLN).

It belongs to the NPH3 family. In terms of tissue distribution, expressed in the hypocotyl cells that would differentiate into vascular bundles. Highly expressed in primary root tips and radicles.

The protein resides in the cell membrane. It is found in the cytoplasm. Its subcellular location is the cytosol. The protein operates within protein modification; protein ubiquitination. Functionally, may act as a substrate-specific adapter of an E3 ubiquitin-protein ligase complex (CUL3-RBX1-BTB) which mediates the ubiquitination and subsequent proteasomal degradation of target proteins. Plays an essential role in auxin-mediated organogenesis and in root gravitropic responses through the control of PIN proteins (e.g. PIN1 and PIN2) polarity in the root tip endodermal cell layer and in shoot epidermis. Recruited to the plasma membrane by PINs (e.g. PIN1 and PIN2) and, in concert with AGC kinases-mediated (e.g. D6PK and PID) PINs phosphorylation, maintains their polarity through limiting lateral diffusion-based escape. In Arabidopsis thaliana (Mouse-ear cress), this protein is Phototropic-responsive NPH3 family protein NPY4.